We begin with the raw amino-acid sequence, 213 residues long: uncharacterized protein (213 aa).

Catalysis depends on charge relay system residues S114, D162, and H194.

It belongs to the AB hydrolase superfamily. AB hydrolase 2 family.

This is an uncharacterized protein from Rickettsia bellii (strain RML369-C).